Reading from the N-terminus, the 911-residue chain is Valine--tRNA ligase (911 aa).

The 'HIGH' region signature appears at 57-67 (PTVSGSLHVGH). Residues 599-603 (KMSKS) carry the 'KMSKS' region motif. K602 is an ATP binding site. The tract at residues 882–911 (EESAAEDAPETEVAVEASELGEPPAKKPKH) is disordered.

The protein belongs to the class-I aminoacyl-tRNA synthetase family. ValS type 2 subfamily. In terms of assembly, monomer.

It is found in the cytoplasm. The enzyme catalyses tRNA(Val) + L-valine + ATP = L-valyl-tRNA(Val) + AMP + diphosphate. In terms of biological role, catalyzes the attachment of valine to tRNA(Val). As ValRS can inadvertently accommodate and process structurally similar amino acids such as threonine, to avoid such errors, it has a 'posttransfer' editing activity that hydrolyzes mischarged Thr-tRNA(Val) in a tRNA-dependent manner. This is Valine--tRNA ligase from Bifidobacterium longum (strain DJO10A).